Consider the following 296-residue polypeptide: Protein FAM110A (296 aa).

Disordered stretches follow at residues Asn-61–Gly-97 and Pro-117–Leu-192. 2 stretches are compositionally biased toward pro residues: residues Pro-139–Ser-148 and Pro-161–Ser-170.

Belongs to the FAM110 family. As to quaternary structure, may interact with CSPP1.

The protein localises to the cytoplasm. Its subcellular location is the cytoskeleton. The protein resides in the microtubule organizing center. It is found in the centrosome. It localises to the spindle pole. The sequence is that of Protein FAM110A (Fam110a) from Mus musculus (Mouse).